Consider the following 147-residue polypeptide: 3-hydroxyacyl-[acyl-carrier-protein] dehydratase FabZ (147 aa).

Residue H53 is part of the active site.

This sequence belongs to the thioester dehydratase family. FabZ subfamily.

It localises to the cytoplasm. The catalysed reaction is a (3R)-hydroxyacyl-[ACP] = a (2E)-enoyl-[ACP] + H2O. Involved in unsaturated fatty acids biosynthesis. Catalyzes the dehydration of short chain beta-hydroxyacyl-ACPs and long chain saturated and unsaturated beta-hydroxyacyl-ACPs. The protein is 3-hydroxyacyl-[acyl-carrier-protein] dehydratase FabZ of Synechococcus sp. (strain WH7803).